The chain runs to 26 residues: Potassium channel toxin alpha-KTx6 OcyKTx1 (26 aa).

An intrachain disulfide couples C3 to C24.

The protein belongs to the short scorpion toxin superfamily. Potassium channel inhibitor family. Alpha-KTx 06 subfamily. Expressed by the venom gland.

The protein localises to the secreted. Blocks voltage-gated potassium channels. This is Potassium channel toxin alpha-KTx6 OcyKTx1 from Opisthacanthus cayaporum (South American scorpion).